Reading from the N-terminus, the 345-residue chain is MTKALSGFCCSLSLSTLVRSSSSHMDSDIVSSSIDRSQTAMPDALAFKSINDPIKNQINSCAAICVKQDDPCHFLRVLYESLITGGLAGVVVEAALYPIDTIKTRIQVARDGGKIIWKGLYSGLGGNLVGVLPASALFFGVYEPTKQKLLKVLPDNLSAVAHLAAGALGGAVSSIVRVPTEVVKQRMQTGQFVSAPDAVRLIIAKEGFGGMYAGYGSFLLRDLPFDALQFCVYEQLRIGYKLAARRDLNDPENAMIGAFAGAVTGVLTTPLDVIKTRLMVQGSGTQYKGVSDCIKTIIREEGSSALWKGMGPRVLWIGIGGSIFFGVLEKTKQILSERSQKSHNA.

A chloroplast-targeting transit peptide spans 1-31; it reads MTKALSGFCCSLSLSTLVRSSSSHMDSDIVS. Solcar repeat units lie at residues 76 to 148, 157 to 239, and 252 to 334; these read RVLY…TKQK, LSAV…LRIG, and ENAM…TKQI. 5 helical membrane-spanning segments follow: residues 82–102, 121–141, 156–176, 254–274, and 309–329; these read LITG…IDTI, YSGL…FFGV, NLSA…SSIV, AMIG…LDVI, and GMGP…GVLE.

It belongs to the mitochondrial carrier (TC 2.A.29) family. As to expression, expressed at low levels in seedlings, leaves, flowers, stems and roots.

Its subcellular location is the plastid. The protein resides in the chloroplast membrane. Its function is as follows. Probable S-adenosylmethionine (SAM) transporter able to catalyze both uniport and exchange reactions through membranes. This chain is Probable S-adenosylmethionine carrier 2, chloroplastic (SAMC2), found in Arabidopsis thaliana (Mouse-ear cress).